A 551-amino-acid polypeptide reads, in one-letter code: Crossover junction endonuclease EME1B (551 aa).

Disordered regions lie at residues 1-55 (MNDH…PIFV) and 187-239 (TTLP…RLEK). Residues 37 to 51 (SDPTPQKQPPESSFT) are compositionally biased toward polar residues. Over residues 202-239 (SKEDKTSAMEEKKLRKEQERLEKAASKAEEAERKRLEK) the composition is skewed to basic and acidic residues. Residues 203 to 253 (KEDKTSAMEEKKLRKEQERLEKAASKAEEAERKRLEKEKKKWEKGKLALKS) adopt a coiled-coil conformation. The region spanning 287-484 (NPIERSIVWT…PSMKSLLKVY (198 aa)) is the ERCC4 domain.

The protein belongs to the EME1/MMS4 family. Forms a heterodimer with MUS81. Mg(2+) is required as a cofactor. It depends on Ca(2+) as a cofactor.

The protein localises to the nucleus. Functionally, interacts with MUS81 to form a DNA structure-specific endonuclease with substrate preference for branched DNA structures with a 5'-end at the branch nick. Typical substrates include 3'-flap structures, D-loops, replication forks, nicked Holliday junctions and also intact Holliday junctions with a reduced efficiency. May be required in mitosis for the processing of stalled or collapsed replication fork intermediates. Plays a role in DNA repair and in genotoxic stress-induced homologous recombination (HR) in somatic cells. Mediates a subset of meiotic recombination events that are insensitive to crossover interference. This chain is Crossover junction endonuclease EME1B (EME1B), found in Arabidopsis thaliana (Mouse-ear cress).